Here is a 450-residue protein sequence, read N- to C-terminus: Tubulin alpha chain (450 aa).

Residue Q11 coordinates GTP. Position 40 is an N6-acetyllysine (K40). GTP-binding residues include E71, S140, G144, T145, T179, N206, and N228. E71 contacts Mg(2+). The active site involves E254.

This sequence belongs to the tubulin family. In terms of assembly, dimer of alpha and beta chains. A typical microtubule is a hollow water-filled tube with an outer diameter of 25 nm and an inner diameter of 15 nM. Alpha-beta heterodimers associate head-to-tail to form protofilaments running lengthwise along the microtubule wall with the beta-tubulin subunit facing the microtubule plus end conferring a structural polarity. Microtubules usually have 13 protofilaments but different protofilament numbers can be found in some organisms and specialized cells. The cofactor is Mg(2+). Post-translationally, undergoes a tyrosination/detyrosination cycle, the cyclic removal and re-addition of a C-terminal tyrosine residue by the enzymes tubulin tyrosine carboxypeptidase (TTCP) and tubulin tyrosine ligase (TTL), respectively. In terms of processing, acetylation of alpha chains at Lys-40 stabilizes microtubules and affects affinity and processivity of microtubule motors. This modification has a role in multiple cellular functions, ranging from cell motility, cell cycle progression or cell differentiation to intracellular trafficking and signaling.

The protein localises to the cytoplasm. Its subcellular location is the cytoskeleton. It catalyses the reaction GTP + H2O = GDP + phosphate + H(+). Functionally, tubulin is the major constituent of microtubules, a cylinder consisting of laterally associated linear protofilaments composed of alpha- and beta-tubulin heterodimers. Microtubules grow by the addition of GTP-tubulin dimers to the microtubule end, where a stabilizing cap forms. Below the cap, tubulin dimers are in GDP-bound state, owing to GTPase activity of alpha-tubulin. The chain is Tubulin alpha chain from Lepidoglyphus destructor (Storage mite).